A 525-amino-acid chain; its full sequence is Cysteine--tRNA ligase (525 aa).

Cysteine 49 contributes to the Zn(2+) binding site. The 'HIGH' region signature appears at 51-61 (VTVYDLCHLGH). Residues cysteine 258, histidine 283, and glutamate 287 each coordinate Zn(2+). The 'KMSKS' region signature appears at 315–319 (KMSKS). Lysine 318 provides a ligand contact to ATP.

This sequence belongs to the class-I aminoacyl-tRNA synthetase family. Monomer. It depends on Zn(2+) as a cofactor.

It is found in the cytoplasm. The catalysed reaction is tRNA(Cys) + L-cysteine + ATP = L-cysteinyl-tRNA(Cys) + AMP + diphosphate. The protein is Cysteine--tRNA ligase of Synechococcus sp. (strain JA-2-3B'a(2-13)) (Cyanobacteria bacterium Yellowstone B-Prime).